Consider the following 394-residue polypeptide: Na(+)/H(+) antiporter NhaA (394 aa).

Helical transmembrane passes span 11–31, 59–79, 95–115, 125–145, 155–175, 177–197, 203–220, 254–274, 296–316, 328–348, and 365–385; these read LEAA…IFAN, LLMW…GMEV, IFPA…YWFI, GWAI…ALLS, FLLA…ALFF, HEMS…LVAM, TGLI…ASVL, ALAP…NAGV, LIIG…LLGI, IFAI…IAGL, and LGIL…LKIT.

Belongs to the NhaA Na(+)/H(+) (TC 2.A.33) antiporter family.

The protein resides in the cell inner membrane. The catalysed reaction is Na(+)(in) + 2 H(+)(out) = Na(+)(out) + 2 H(+)(in). In terms of biological role, na(+)/H(+) antiporter that extrudes sodium in exchange for external protons. The protein is Na(+)/H(+) antiporter NhaA of Actinobacillus pleuropneumoniae serotype 7 (strain AP76).